A 499-amino-acid chain; its full sequence is Probable cytosol aminopeptidase (499 aa).

Lys-264 and Asp-269 together coordinate Mn(2+). The active site involves Lys-276. Mn(2+) is bound by residues Asp-287, Asp-346, and Glu-348. Residue Arg-350 is part of the active site.

It belongs to the peptidase M17 family. Mn(2+) is required as a cofactor.

It is found in the cytoplasm. It carries out the reaction Release of an N-terminal amino acid, Xaa-|-Yaa-, in which Xaa is preferably Leu, but may be other amino acids including Pro although not Arg or Lys, and Yaa may be Pro. Amino acid amides and methyl esters are also readily hydrolyzed, but rates on arylamides are exceedingly low.. It catalyses the reaction Release of an N-terminal amino acid, preferentially leucine, but not glutamic or aspartic acids.. Functionally, presumably involved in the processing and regular turnover of intracellular proteins. Catalyzes the removal of unsubstituted N-terminal amino acids from various peptides. The chain is Probable cytosol aminopeptidase from Rhodopseudomonas palustris (strain BisB18).